The sequence spans 257 residues: MKVIDLNCDMGESFGHYKIGCDEEVINYISSANIACGFHAGDPQVMDYTVKLARDNKVGVGAHPGFNDLQGFGRRKIHMTGEEIVNELIYQIGAIRSFCEANGVGLSHVKPHGALNNMASVDENLARAVAKAIKLTDPNLIYIALAGSKMEQIGREEGLKVAKEAFADRQYNPDGTLVSRQEAGAVLHDKETIIERVVQMASEGVVTAKDGTKLNINPDTICVHGDNPEAVELAASIRHMLQEHGITVKSLGTWFTG.

Belongs to the LamB/PxpA family. In terms of assembly, forms a complex composed of PxpA, PxpB and PxpC.

The enzyme catalyses 5-oxo-L-proline + ATP + 2 H2O = L-glutamate + ADP + phosphate + H(+). Its function is as follows. Catalyzes the cleavage of 5-oxoproline to form L-glutamate coupled to the hydrolysis of ATP to ADP and inorganic phosphate. This Natranaerobius thermophilus (strain ATCC BAA-1301 / DSM 18059 / JW/NM-WN-LF) protein is 5-oxoprolinase subunit A.